A 344-amino-acid polypeptide reads, in one-letter code: uncharacterized protein (344 aa).

6 consecutive transmembrane segments (helical) span residues 155 to 175, 181 to 201, 221 to 241, 254 to 274, 291 to 311, and 319 to 339; these read IARITLAPLGMIFLVYSIFLV, WGLGGIIFFLGVYFMVKAYGW, LSFIFYVTSAILLIISIVNGF, ISSFIFYSTWWFVLSGIFALL, FTIIFLLIAFGLIVWASAAYV, and ALQNLAGAIVGAILIAAIGVF.

It to M.jannaschii MJ1032.

The protein localises to the cell membrane. This is an uncharacterized protein from Archaeoglobus fulgidus (strain ATCC 49558 / DSM 4304 / JCM 9628 / NBRC 100126 / VC-16).